A 768-amino-acid chain; its full sequence is DNA ligase 1 (768 aa).

Residues 42 to 139 (VEVSQSSSDS…KEPPLESNAR (98 aa)) form a disordered region. Over residues 52–99 (KNVDGRSTSEKRKVESVKLVDESKHNNHDDTGTQNVERENNIVSEAKK) the composition is skewed to basic and acidic residues. The span at 104 to 124 (GSSSSSSDAVSSNNDSGASTP) shows a compositional bias: low complexity. The tract at residues 309–318 (KLRLQLAEKT) is interaction with target DNA. ATP is bound at residue E414. K416 functions as the N6-AMP-lysine intermediate in the catalytic mechanism. Residues R421 and R437 each contribute to the ATP site. E469 serves as a coordination point for Mg(2+). Residues 490–492 (KRK) are interaction with target DNA. Residue E568 coordinates Mg(2+). ATP contacts are provided by K573, R587, and K593.

This sequence belongs to the ATP-dependent DNA ligase family. Requires Mg(2+) as cofactor.

The protein localises to the nucleus. It catalyses the reaction ATP + (deoxyribonucleotide)n-3'-hydroxyl + 5'-phospho-(deoxyribonucleotide)m = (deoxyribonucleotide)n+m + AMP + diphosphate.. In terms of biological role, DNA ligase that seals nicks in double-stranded DNA during DNA replication, DNA recombination and DNA repair. The polypeptide is DNA ligase 1 (cdc17) (Schizosaccharomyces pombe (strain 972 / ATCC 24843) (Fission yeast)).